Here is a 216-residue protein sequence, read N- to C-terminus: uncharacterized protein (216 aa).

The protein belongs to the channel forming colicin family.

This is an uncharacterized protein from Escherichia coli.